Here is a 3119-residue protein sequence, read N- to C-terminus: Huntingtin (3119 aa).

The segment at 1–65 (MATLEKLMKA…LPGPAEEPLH (65 aa)) is disordered. An N6-acetyllysine modification is found at lysine 9. The span at 24–60 (QPPPQAPPPPPPPPPQPPQPPPQGQPPPPPPPLPGPA) shows a compositional bias: pro residues. Residues lysine 155 and lysine 213 each carry the N6-acetyllysine modification. 2 HEAT repeats span residues 183 to 220 (PYLVNLLPCLTRTSKRPEESVQETLAAAVPKIMASFGN) and 225 to 262 (NEIKVLLKAFIANLKSSSPTVRRTAAGSAVSICQHSRR). N6-acetyllysine is present on lysine 322. Serine 396, serine 398, and serine 411 each carry phosphoserine. Residue lysine 421 is modified to N6-acetyllysine. An interaction with ZDHHC17 region spans residues 470-481 (GHDIITEQPRSQ). The tract at residues 495–558 (DLTSAATDGD…DSAVTPSDSS (64 aa)) is disordered. Residues 529 to 558 (DGTQASSPISDSSQTTTEGPDSAVTPSDSS) show a composition bias toward polar residues. The N-myristoyl glycine moiety is linked to residue glycine 530. Serine 620 and serine 623 each carry phosphoserine. 2 HEAT repeats span residues 782 to 819 (FSLVDCIPLLQKTLKDESSVTCKLACTAVRHCVLSLCS) and 882 to 920 (KLQERVLNNVVIYLLGDEDPRVRHVAATSLTRLVPKLFY). A disordered region spans residues 1146-1204 (KAALPSLTNPPSLSPIRRKGKEKEPGEQASTPMSPKKVGEASAASRQSDTSGPVTASKS). Over residues 1149–1160 (LPSLTNPPSLSP) the composition is skewed to low complexity. Residues serine 1159 and serine 1179 each carry the phosphoserine; by CDK5 modification. Residues 1189-1204 (ASRQSDTSGPVTASKS) are compositionally biased toward polar residues. The HEAT 5 repeat unit spans residues 1404–1441 (LFEPLVIKALKQYTTTTSVQLQKQVLDLLAQLVQLRVN). Serine 1853 is subject to Phosphoserine. The short motif at 2372–2381 (IVISLARLPL) is the Nuclear export signal element. Residues 2610–2637 (EEEWDEEEEEESDVPAPTSPPVSPVNSR) are disordered. Residues 2611 to 2622 (EEWDEEEEEESD) show a composition bias toward acidic residues.

Belongs to the huntingtin family. As to quaternary structure, interacts with PFN1. Interacts through its N-terminus with PRPF40A. Interacts with PQBP1. Interacts with SETD2. Interacts with SH3GLB1. Interacts with SYVN. Interacts with TPR; the interaction is inhibited by forms of Huntingtin with expanded polyglutamine stretch. Interacts with ZDHHC13 (via ANK repeats). Interacts with ZDHHC17 (via ANK repeats). Interacts with F8A1/F8A2/F8A3. Found in a complex with F8A1/F8A2/F8A3, HTT and RAB5A; mediates the recruitment of HTT by RAB5A. In terms of processing, phosphorylation at Ser-1159 and Ser-1179 by CDK5 in response to DNA damage in nuclei of neurons protects neurons against polyglutamine expansion as well as DNA damage mediated toxicity. Cleaved by caspases downstream of the polyglutamine stretch. Post-translationally, myristoylated at Gly-530, following proteolytic cleavage at Asp-529. As to expression, the highest level is seen throughout the brain, but it is also found in the stomach, heart, testis, adipose tissue, muscle, spleen, liver, and kidney.

The protein resides in the cytoplasm. Its subcellular location is the nucleus. The protein localises to the cytoplasmic vesicle. It localises to the autophagosome. Its function is as follows. May play a role in microtubule-mediated transport or vesicle function. In terms of biological role, promotes the formation of autophagic vesicles. In Mus musculus (Mouse), this protein is Huntingtin (Htt).